The following is a 304-amino-acid chain: UDP-3-O-acyl-N-acetylglucosamine deacetylase (304 aa).

Zn(2+) contacts are provided by His-78, His-237, and Asp-241. The active-site Proton donor is His-264.

This sequence belongs to the LpxC family. The cofactor is Zn(2+).

It catalyses the reaction a UDP-3-O-[(3R)-3-hydroxyacyl]-N-acetyl-alpha-D-glucosamine + H2O = a UDP-3-O-[(3R)-3-hydroxyacyl]-alpha-D-glucosamine + acetate. The protein operates within glycolipid biosynthesis; lipid IV(A) biosynthesis; lipid IV(A) from (3R)-3-hydroxytetradecanoyl-[acyl-carrier-protein] and UDP-N-acetyl-alpha-D-glucosamine: step 2/6. Catalyzes the hydrolysis of UDP-3-O-myristoyl-N-acetylglucosamine to form UDP-3-O-myristoylglucosamine and acetate, the committed step in lipid A biosynthesis. The protein is UDP-3-O-acyl-N-acetylglucosamine deacetylase of Marinobacter nauticus (strain ATCC 700491 / DSM 11845 / VT8) (Marinobacter aquaeolei).